The following is a 669-amino-acid chain: UvrABC system protein B (669 aa).

The region spanning 26-414 is the Helicase ATP-binding domain; it reads TNFHAGIAKQ…AGEVIELLVR (389 aa). 39–46 is an ATP binding site; the sequence is GVTGSGKT. Positions 92 to 115 match the Beta-hairpin motif; sequence YYDYYQPEAYVPASDTFIEKDSSI. A Helicase C-terminal domain is found at 435 to 597; the sequence is LISQINVCIK…SVVRPISDIL (163 aa). Residues 631-666 enclose the UVR domain; that stretch reads AAQMKVLEQQMYQHARDLEFEDAARIRDQIQRLREA.

Belongs to the UvrB family. Forms a heterotetramer with UvrA during the search for lesions. Interacts with UvrC in an incision complex.

It is found in the cytoplasm. In terms of biological role, the UvrABC repair system catalyzes the recognition and processing of DNA lesions. A damage recognition complex composed of 2 UvrA and 2 UvrB subunits scans DNA for abnormalities. Upon binding of the UvrA(2)B(2) complex to a putative damaged site, the DNA wraps around one UvrB monomer. DNA wrap is dependent on ATP binding by UvrB and probably causes local melting of the DNA helix, facilitating insertion of UvrB beta-hairpin between the DNA strands. Then UvrB probes one DNA strand for the presence of a lesion. If a lesion is found the UvrA subunits dissociate and the UvrB-DNA preincision complex is formed. This complex is subsequently bound by UvrC and the second UvrB is released. If no lesion is found, the DNA wraps around the other UvrB subunit that will check the other stand for damage. The sequence is that of UvrABC system protein B from Xylella fastidiosa (strain 9a5c).